A 678-amino-acid chain; its full sequence is DNA ligase (678 aa).

Residues 47–51 (DSDYD), 96–97 (SL), and Glu122 each bind NAD(+). Catalysis depends on Lys124, which acts as the N6-AMP-lysine intermediate. 4 residues coordinate NAD(+): Arg145, Glu182, Lys300, and Lys324. Residues Cys418, Cys421, Cys436, and Cys442 each coordinate Zn(2+). The BRCT domain occupies 602–678 (AHNESFTNKT…IFEEDLQNLL (77 aa)).

Belongs to the NAD-dependent DNA ligase family. LigA subfamily. Requires Mg(2+) as cofactor. Mn(2+) is required as a cofactor.

The catalysed reaction is NAD(+) + (deoxyribonucleotide)n-3'-hydroxyl + 5'-phospho-(deoxyribonucleotide)m = (deoxyribonucleotide)n+m + AMP + beta-nicotinamide D-nucleotide.. In terms of biological role, DNA ligase that catalyzes the formation of phosphodiester linkages between 5'-phosphoryl and 3'-hydroxyl groups in double-stranded DNA using NAD as a coenzyme and as the energy source for the reaction. It is essential for DNA replication and repair of damaged DNA. The sequence is that of DNA ligase from Francisella philomiragia subsp. philomiragia (strain ATCC 25017 / CCUG 19701 / FSC 153 / O#319-036).